The primary structure comprises 97 residues: YcgL domain-containing protein CKO_01183 (97 aa).

A YcgL domain is found at 1–85 (MFCVIYRSSK…PPEDLLKQHL (85 aa)). Positions 74–97 (PPPPEDLLKQHLSAPGENKPDAKS) are disordered.

The sequence is that of YcgL domain-containing protein CKO_01183 from Citrobacter koseri (strain ATCC BAA-895 / CDC 4225-83 / SGSC4696).